We begin with the raw amino-acid sequence, 209 residues long: Uridine kinase (209 aa).

12 to 19 (GGSASGKT) serves as a coordination point for ATP.

Belongs to the uridine kinase family.

Its subcellular location is the cytoplasm. It carries out the reaction uridine + ATP = UMP + ADP + H(+). It catalyses the reaction cytidine + ATP = CMP + ADP + H(+). The protein operates within pyrimidine metabolism; CTP biosynthesis via salvage pathway; CTP from cytidine: step 1/3. It functions in the pathway pyrimidine metabolism; UMP biosynthesis via salvage pathway; UMP from uridine: step 1/1. The sequence is that of Uridine kinase from Chloroflexus aggregans (strain MD-66 / DSM 9485).